The primary structure comprises 338 residues: Aspartate carbamoyltransferase catalytic subunit (338 aa).

The carbamoyl phosphate site is built by Arg-59 and Thr-60. Lys-87 contributes to the L-aspartate binding site. Carbamoyl phosphate is bound by residues Arg-109, His-142, and Gln-145. L-aspartate is bound by residues Arg-182 and Arg-253. Gly-294 and Pro-295 together coordinate carbamoyl phosphate.

This sequence belongs to the aspartate/ornithine carbamoyltransferase superfamily. ATCase family. As to quaternary structure, heterododecamer (2C3:3R2) of six catalytic PyrB chains organized as two trimers (C3), and six regulatory PyrI chains organized as three dimers (R2).

The catalysed reaction is carbamoyl phosphate + L-aspartate = N-carbamoyl-L-aspartate + phosphate + H(+). The protein operates within pyrimidine metabolism; UMP biosynthesis via de novo pathway; (S)-dihydroorotate from bicarbonate: step 2/3. Catalyzes the condensation of carbamoyl phosphate and aspartate to form carbamoyl aspartate and inorganic phosphate, the committed step in the de novo pyrimidine nucleotide biosynthesis pathway. This is Aspartate carbamoyltransferase catalytic subunit from Prochlorococcus marinus (strain AS9601).